Consider the following 78-residue polypeptide: Defensin-like protein 171 (78 aa).

A signal peptide spans 1-23 (MAKTASSLVLPIIFLVMFALVEQ). 4 disulfide bridges follow: cysteine 27-cysteine 71, cysteine 34-cysteine 56, cysteine 40-cysteine 65, and cysteine 44-cysteine 67.

The protein belongs to the DEFL family.

The protein localises to the secreted. The chain is Defensin-like protein 171 (LCR61) from Arabidopsis thaliana (Mouse-ear cress).